The sequence spans 180 residues: MAELVAKRYAKALFQVAFEMNRYEDVTEELAFVAENLKQHSDLNELLKSPVITLGEKKEILSTIFKEQISPEVFNFLRILLDKSRQGDFQEIYEEYKILADAGKNKIEAVAITALPMDNNDLLKLQVNLSMSSGKNVKLKNEIDPTVIGGVLVKMGDKIIDGTVKARLNQMQDQLLQIIV.

The protein belongs to the ATPase delta chain family. As to quaternary structure, F-type ATPases have 2 components, F(1) - the catalytic core - and F(0) - the membrane proton channel. F(1) has five subunits: alpha(3), beta(3), gamma(1), delta(1), epsilon(1). F(0) has three main subunits: a(1), b(2) and c(10-14). The alpha and beta chains form an alternating ring which encloses part of the gamma chain. F(1) is attached to F(0) by a central stalk formed by the gamma and epsilon chains, while a peripheral stalk is formed by the delta and b chains.

It localises to the cell membrane. F(1)F(0) ATP synthase produces ATP from ADP in the presence of a proton or sodium gradient. F-type ATPases consist of two structural domains, F(1) containing the extramembraneous catalytic core and F(0) containing the membrane proton channel, linked together by a central stalk and a peripheral stalk. During catalysis, ATP synthesis in the catalytic domain of F(1) is coupled via a rotary mechanism of the central stalk subunits to proton translocation. Its function is as follows. This protein is part of the stalk that links CF(0) to CF(1). It either transmits conformational changes from CF(0) to CF(1) or is implicated in proton conduction. In Alkaliphilus metalliredigens (strain QYMF), this protein is ATP synthase subunit delta.